We begin with the raw amino-acid sequence, 35 residues long: Photosystem II reaction center protein T (35 aa).

Residues 3-23 (ALVYTFLLIGTLGIIFFAIFF) traverse the membrane as a helical segment.

The protein belongs to the PsbT family. In terms of assembly, PSII is composed of 1 copy each of membrane proteins PsbA, PsbB, PsbC, PsbD, PsbE, PsbF, PsbH, PsbI, PsbJ, PsbK, PsbL, PsbM, PsbT, PsbY, PsbZ, Psb30/Ycf12, at least 3 peripheral proteins of the oxygen-evolving complex and a large number of cofactors. It forms dimeric complexes.

Its subcellular location is the plastid. The protein localises to the chloroplast thylakoid membrane. Its function is as follows. Found at the monomer-monomer interface of the photosystem II (PS II) dimer, plays a role in assembly and dimerization of PSII. PSII is a light-driven water plastoquinone oxidoreductase, using light energy to abstract electrons from H(2)O, generating a proton gradient subsequently used for ATP formation. The protein is Photosystem II reaction center protein T of Coleochaete orbicularis (Charophycean green alga).